A 117-amino-acid polypeptide reads, in one-letter code: Immunoglobulin lambda variable 1-44 (117 aa).

The N-terminal stretch at 1 to 19 is a signal peptide; that stretch reads MASFPLLLTLLTHCAGSWA. Gln-20 carries the pyrrolidone carboxylic acid modification. Positions 20–44 are framework-1; the sequence is QSVLTQPPSASGTPGQRVTISCSGS. Positions 20–117 constitute an Ig-like domain; it reads QSVLTQPPSA…CAAWDDSLNG (98 aa). Positions 24-35 are enriched in polar residues; it reads TQPPSASGTPGQ. The interval 24–45 is disordered; sequence TQPPSASGTPGQRVTISCSGSS. The cysteines at positions 41 and 108 are disulfide-linked. The interval 45 to 52 is complementarity-determining-1; that stretch reads SSNIGSNT. The tract at residues 53–69 is framework-2; it reads VNWYQQLPGTAPKLLIY. The interval 70–72 is complementarity-determining-2; the sequence is SNN. The segment at 73-108 is framework-3; it reads QRPSGVPDRFSGSKSGTSASLAISGLQSEDEADYYC. A complementarity-determining-3 region spans residues 109–117; the sequence is AAWDDSLNG.

In terms of assembly, immunoglobulins are composed of two identical heavy chains and two identical light chains; disulfide-linked.

Its subcellular location is the secreted. It localises to the cell membrane. V region of the variable domain of immunoglobulin light chains that participates in the antigen recognition. Immunoglobulins, also known as antibodies, are membrane-bound or secreted glycoproteins produced by B lymphocytes. In the recognition phase of humoral immunity, the membrane-bound immunoglobulins serve as receptors which, upon binding of a specific antigen, trigger the clonal expansion and differentiation of B lymphocytes into immunoglobulins-secreting plasma cells. Secreted immunoglobulins mediate the effector phase of humoral immunity, which results in the elimination of bound antigens. The antigen binding site is formed by the variable domain of one heavy chain, together with that of its associated light chain. Thus, each immunoglobulin has two antigen binding sites with remarkable affinity for a particular antigen. The variable domains are assembled by a process called V-(D)-J rearrangement and can then be subjected to somatic hypermutations which, after exposure to antigen and selection, allow affinity maturation for a particular antigen. The sequence is that of Immunoglobulin lambda variable 1-44 from Homo sapiens (Human).